The primary structure comprises 106 residues: Integration host factor subunit alpha (106 aa).

The protein belongs to the bacterial histone-like protein family. As to quaternary structure, heterodimer of an alpha and a beta chain.

Functionally, this protein is one of the two subunits of integration host factor, a specific DNA-binding protein that functions in genetic recombination as well as in transcriptional and translational control. The sequence is that of Integration host factor subunit alpha from Methylobacterium radiotolerans (strain ATCC 27329 / DSM 1819 / JCM 2831 / NBRC 15690 / NCIMB 10815 / 0-1).